We begin with the raw amino-acid sequence, 200 residues long: MQLNVNDAQAIEVSELTFGGEFNETLVHQAVVAYMAGGRQGSKQQKTRSDVRGGGKRPWRQKGTGRARAGTIRSPIWRGGGTTFAARPQDHTQKLNKKMYRAALRSILAELVRTDRLVVVQDFAVEAPKTKDLLSKLTGMGLTDVLIVSDAVDQNLYLAARNLPHVDVRDVQGSDPVSLIAYDKVLITVSAVKKFEELLG.

Residues 38 to 68 form a disordered region; the sequence is GRQGSKQQKTRSDVRGGGKRPWRQKGTGRAR. The segment covering 54-65 has biased composition (basic residues); the sequence is GGKRPWRQKGTG.

Belongs to the universal ribosomal protein uL4 family. Part of the 50S ribosomal subunit.

In terms of biological role, one of the primary rRNA binding proteins, this protein initially binds near the 5'-end of the 23S rRNA. It is important during the early stages of 50S assembly. It makes multiple contacts with different domains of the 23S rRNA in the assembled 50S subunit and ribosome. Its function is as follows. Forms part of the polypeptide exit tunnel. This is Large ribosomal subunit protein uL4 from Pseudomonas savastanoi pv. phaseolicola (strain 1448A / Race 6) (Pseudomonas syringae pv. phaseolicola (strain 1448A / Race 6)).